Reading from the N-terminus, the 292-residue chain is 1D-myo-inositol 2-acetamido-2-deoxy-alpha-D-glucopyranoside deacetylase (292 aa).

Positions 12, 15, and 147 each coordinate Zn(2+).

Belongs to the MshB deacetylase family. Zn(2+) is required as a cofactor.

It catalyses the reaction 1D-myo-inositol 2-acetamido-2-deoxy-alpha-D-glucopyranoside + H2O = 1D-myo-inositol 2-amino-2-deoxy-alpha-D-glucopyranoside + acetate. Catalyzes the deacetylation of 1D-myo-inositol 2-acetamido-2-deoxy-alpha-D-glucopyranoside (GlcNAc-Ins) in the mycothiol biosynthesis pathway. In Rhodococcus opacus (strain B4), this protein is 1D-myo-inositol 2-acetamido-2-deoxy-alpha-D-glucopyranoside deacetylase.